A 233-amino-acid chain; its full sequence is Glycolipid transfer protein 3 (233 aa).

A ganglioside GM3 (d18:1(4E)) contacts are provided by Asp79, Asn83, Trp126, and His165.

Belongs to the GLTP family.

In terms of biological role, may be involved in glycolipids transfer. The sequence is that of Glycolipid transfer protein 3 from Arabidopsis thaliana (Mouse-ear cress).